A 1125-amino-acid chain; its full sequence is MSAHHAEQAESPLDNREKLTTAVDKLELVLPCAAPLYDFMHLNTMQGYHHISFAEAMAAHFELTGIRGYLPEEDFRKHYARGRIDDADLNESLANNTHGRNREIVLKVSGRPINKQDIWRISLIQDINPLSPSRFRWQIKEYDALERFQNGVPKSARDTLLNATQETDQNRRTESQAIRDLWEACLRVFQLENPNLHSEELGELVDLEEFSRSQAEGKQSKFRTSQPTLIPQEEMLAEARKDLHHLVDKVGEELSLRGLLQALTGEDLLDQVRPILIRFCASHLDEGFTAWSLPERGQGLYAAWRKCPFAELGLDLARLPDWQSFHAELPEHSVDAVIACLERLKIPESRWEGYLKRIAVELPGWSGLINWRHHRPKYKPNRKAPTSLMDYLAIRLFLDVIHIEQVTQNTWGIAGNLEELKTYFENYLWEFSGRYALFSNTLPEYLAIRAQELIALPRTAQKDRENWRTVSNMIHNWKHNPSAERTKRQTVHSHVWRLFCLAQHLGLPGNEVGKLSSSEAEQLLAILDELTTSERGYIWLCAYEYHYREDYFAALTQNHGRGRWANRNERPEAQLIFCFDDREEGIRRHLEEVNPNLETLGAPGFFGVPIQWRGLDYPDTTPHCPVVVTPVNELHEEPRPEAKKRYGLHKRLYNFKQFLLRVLHNKTRRDLLTSKVLIDVLFPGMLAVLAGKVFFPFQQASLKRKATAALVPPVPTQLKLTVPDDGTEATPDNLRVGFTDAEQAERLAAFLRAIGFTSGFAPLVVLSGHGSMSENNPQLASYDCGASGGRHGGPNARAFAAMANRPEIRARLAEQGIHIPDDTWFIGTEHDTCSESFPWFDLDKVPANFAPALKKLKAEVDQALLLSAHERCRRMASAPRKPSLQQARRHVAERGTDFSQARPELGHATVASALIGRRSVTRGIFLDRRCFVLSYDPTIDDAEGTILEGVLKNAGPVGVGINLDYYFSAANNQGFGSGSKVAQNVTGLFGVMQGIDDDLRTWCSYQMVDVHEPMRVLTVVEATTETLTAIYKRQPSSQEPAGGSWLLPPLRQLIDGGWLLLAAIHPKTGKISVFDPKQGFIPWKSYREPSPLPVVERSMDWYDGYSDPRPPALVEPKQTETHHAA.

Zn(2+) is bound by residues Cys-578, Asp-580, His-769, and Cys-784. The disordered stretch occupies residues 1106-1125; sequence SDPRPPALVEPKQTETHHAA.

It belongs to the inorganic carbon transporter (TC 9.A.2) DabA family. In terms of assembly, forms a complex with DabB. Zn(2+) serves as cofactor.

It is found in the cell inner membrane. Functionally, part of an energy-coupled inorganic carbon pump. This chain is Probable inorganic carbon transporter subunit DabA, found in Nitrosococcus oceani (strain ATCC 19707 / BCRC 17464 / JCM 30415 / NCIMB 11848 / C-107).